The sequence spans 48 residues: Large ribosomal subunit protein bL34 (48 aa).

Belongs to the bacterial ribosomal protein bL34 family.

This Mycoplasma pneumoniae (strain ATCC 29342 / M129 / Subtype 1) (Mycoplasmoides pneumoniae) protein is Large ribosomal subunit protein bL34 (rpmH).